The sequence spans 369 residues: Phospho-N-acetylmuramoyl-pentapeptide-transferase (369 aa).

The next 10 helical transmembrane spans lie at 13–33 (ISGIGLASSLAAGLGIAALTL), 49–69 (LPLLLCTIASAIAGYFVVPLL), 95–115 (MGGIFFIPVAVVGACVLSNFA), 119–139 (LAVSALTLSYGLIGWIDDWQI), 154–174 (LALQIGFAAAFCLWLMFNQPA), 183–203 (WVSFALPLGFLFWPLAGFVLV), 215–235 (IDGLAGGTVAIALLALGAIVA), 237–257 (TSPALMVFCAALSGSCLGFLA), 281–301 (AVALLTNSLVALFILSGIFFV), and 346–366 (VVSSFYVIAAILAAICLAIAS).

Belongs to the glycosyltransferase 4 family. MraY subfamily. Requires Mg(2+) as cofactor.

The protein localises to the cell inner membrane. It catalyses the reaction UDP-N-acetyl-alpha-D-muramoyl-L-alanyl-gamma-D-glutamyl-meso-2,6-diaminopimeloyl-D-alanyl-D-alanine + di-trans,octa-cis-undecaprenyl phosphate = di-trans,octa-cis-undecaprenyl diphospho-N-acetyl-alpha-D-muramoyl-L-alanyl-D-glutamyl-meso-2,6-diaminopimeloyl-D-alanyl-D-alanine + UMP. It participates in cell wall biogenesis; peptidoglycan biosynthesis. Its function is as follows. Catalyzes the initial step of the lipid cycle reactions in the biosynthesis of the cell wall peptidoglycan: transfers peptidoglycan precursor phospho-MurNAc-pentapeptide from UDP-MurNAc-pentapeptide onto the lipid carrier undecaprenyl phosphate, yielding undecaprenyl-pyrophosphoryl-MurNAc-pentapeptide, known as lipid I. This Nostoc sp. (strain PCC 7120 / SAG 25.82 / UTEX 2576) protein is Phospho-N-acetylmuramoyl-pentapeptide-transferase.